We begin with the raw amino-acid sequence, 398 residues long: Phosphoglycerate kinase (398 aa).

Residues 23 to 25, Arg-38, 61 to 64, Arg-119, and Arg-152 contribute to the substrate site; these read DLN and HFGR. ATP contacts are provided by residues Lys-202, Glu-324, and 354 to 357; that span reads GGDT.

Belongs to the phosphoglycerate kinase family. In terms of assembly, monomer.

It is found in the cytoplasm. The enzyme catalyses (2R)-3-phosphoglycerate + ATP = (2R)-3-phospho-glyceroyl phosphate + ADP. It functions in the pathway carbohydrate degradation; glycolysis; pyruvate from D-glyceraldehyde 3-phosphate: step 2/5. The polypeptide is Phosphoglycerate kinase (Rhodopseudomonas palustris (strain ATCC BAA-98 / CGA009)).